A 326-amino-acid polypeptide reads, in one-letter code: Lipoyl synthase (326 aa).

[4Fe-4S] cluster-binding residues include Cys-68, Cys-73, Cys-79, Cys-94, Cys-98, Cys-101, and Ser-308. Residues 80–297 (FNHGTATFMI…KDVAMGLGFS (218 aa)) enclose the Radical SAM core domain.

This sequence belongs to the radical SAM superfamily. Lipoyl synthase family. [4Fe-4S] cluster is required as a cofactor.

It localises to the cytoplasm. It catalyses the reaction [[Fe-S] cluster scaffold protein carrying a second [4Fe-4S](2+) cluster] + N(6)-octanoyl-L-lysyl-[protein] + 2 oxidized [2Fe-2S]-[ferredoxin] + 2 S-adenosyl-L-methionine + 4 H(+) = [[Fe-S] cluster scaffold protein] + N(6)-[(R)-dihydrolipoyl]-L-lysyl-[protein] + 4 Fe(3+) + 2 hydrogen sulfide + 2 5'-deoxyadenosine + 2 L-methionine + 2 reduced [2Fe-2S]-[ferredoxin]. The protein operates within protein modification; protein lipoylation via endogenous pathway; protein N(6)-(lipoyl)lysine from octanoyl-[acyl-carrier-protein]: step 2/2. Functionally, catalyzes the radical-mediated insertion of two sulfur atoms into the C-6 and C-8 positions of the octanoyl moiety bound to the lipoyl domains of lipoate-dependent enzymes, thereby converting the octanoylated domains into lipoylated derivatives. In Aeromonas salmonicida (strain A449), this protein is Lipoyl synthase.